The sequence spans 309 residues: Foldase protein PrsA 2 (309 aa).

The N-terminal stretch at 1-22 is a signal peptide; the sequence is MKQMNKLITGVVTLATVVTLSA. Residue cysteine 23 is the site of N-palmitoyl cysteine attachment. A lipid anchor (S-diacylglycerol cysteine) is attached at cysteine 23. In terms of domain architecture, PpiC spans 146–241; the sequence is TPTMTAEIMQ…RTYHIIKVTK (96 aa).

Belongs to the PrsA family.

The protein localises to the cell membrane. It catalyses the reaction [protein]-peptidylproline (omega=180) = [protein]-peptidylproline (omega=0). In terms of biological role, plays a major role in protein secretion by helping the post-translocational extracellular folding of several secreted proteins. The polypeptide is Foldase protein PrsA 2 (prsA2) (Streptococcus pyogenes serotype M3 (strain ATCC BAA-595 / MGAS315)).